The sequence spans 1449 residues: VWFA and cache domain-containing protein CG16868 (1449 aa).

Residues 1–23 (MWPNSNLNAVLLILAVLACPTSS) form the signal peptide. Residues 24 to 1220 (QHVPLAMANS…NPQREQHAYS (1197 aa)) are Extracellular-facing. Asparagine 32, asparagine 112, asparagine 153, asparagine 407, asparagine 447, and asparagine 497 each carry an N-linked (GlcNAc...) asparagine glycan. The VWFA domain occupies 320 to 541 (FVLFLIDVGS…TSLPQTSSRI (222 aa)). Residues 557 to 639 (VHPPVVDADS…PRPLIQRETS (83 aa)) form the Cache 1 domain. 3 N-linked (GlcNAc...) asparagine glycosylation sites follow: asparagine 649, asparagine 668, and asparagine 707. The Cache 2 domain occupies 889–934 (TAPYLDAGGAGYIITIAHTIFEGKAHALHSAQQDRPVAVVALDVPY). N-linked (GlcNAc...) asparagine glycans are attached at residues asparagine 1015, asparagine 1025, asparagine 1059, and asparagine 1111. The helical transmembrane segment at 1221 to 1241 (AFGPLGGAIVVLVMVIGFAIY) threads the bilayer. The Cytoplasmic portion of the chain corresponds to 1242 to 1449 (CYRHNLDAQT…VHRHMETAES (208 aa)). Disordered regions lie at residues 1307–1339 (YHVS…SSDQ) and 1352–1416 (DKRH…GGSV). Positions 1359-1369 (DTMSISTSISS) are enriched in low complexity. Over residues 1370 to 1392 (PTNRQQSSSQPNTHPYLSNQPTS) the composition is skewed to polar residues.

This sequence belongs to the calcium channel subunit alpha-2/delta family.

It is found in the membrane. The protein is VWFA and cache domain-containing protein CG16868 of Drosophila melanogaster (Fruit fly).